Consider the following 561-residue polypeptide: Potassium-transporting ATPase potassium-binding subunit (561 aa).

11 helical membrane passes run 5-25, 60-80, 86-106, 131-151, 177-197, 247-267, 281-301, 376-396, 415-435, 489-509, and 531-551; these read LAAG…YVPL, CGYA…LYVL, VLPL…NTAV, GLAV…VALI, ILLP…VIQS, PTPL…VALT, LTVL…TTAA, GLYG…LLVG, ALAV…TVVL, LGLC…ALAG, and FAGL…FPVL.

Belongs to the KdpA family. As to quaternary structure, the system is composed of three essential subunits: KdpA, KdpB and KdpC.

It is found in the cell membrane. Its function is as follows. Part of the high-affinity ATP-driven potassium transport (or Kdp) system, which catalyzes the hydrolysis of ATP coupled with the electrogenic transport of potassium into the cytoplasm. This subunit binds the extracellular potassium ions and delivers the ions to the membrane domain of KdpB through an intramembrane tunnel. This Nocardia farcinica (strain IFM 10152) protein is Potassium-transporting ATPase potassium-binding subunit.